Reading from the N-terminus, the 328-residue chain is Cytochrome c biogenesis protein CcsA (328 aa).

8 consecutive transmembrane segments (helical) span residues 13 to 33 (ISFS…LVNL), 46 to 66 (GIII…IYSG), 73 to 93 (LYES…VSYF), 101 to 121 (LNAI…SGLL), 146 to 166 (MILG…LLVI), 234 to 254 (IISL…VWAN), 263 to 283 (WDPK…YLHI), and 295 to 315 (AIVA…VNLL).

Belongs to the CcmF/CycK/Ccl1/NrfE/CcsA family. As to quaternary structure, may interact with Ccs1.

Its subcellular location is the plastid. It localises to the chloroplast thylakoid membrane. Required during biogenesis of c-type cytochromes (cytochrome c6 and cytochrome f) at the step of heme attachment. The chain is Cytochrome c biogenesis protein CcsA from Capsella bursa-pastoris (Shepherd's purse).